The chain runs to 387 residues: Intraflagellar transport protein 57 (387 aa).

This sequence belongs to the IFT57 family.

It is found in the cell projection. The protein localises to the cilium. It localises to the flagellum. Its subcellular location is the cytoplasm. The protein resides in the cytoskeleton. It is found in the flagellum axoneme. The protein localises to the flagellum basal body. Functionally, component of the intraflagellar transport complex B (IFT-B) involved in flagellar assembly. In Giardia intestinalis (strain ATCC 50803 / WB clone C6) (Giardia lamblia), this protein is Intraflagellar transport protein 57.